The chain runs to 369 residues: Saccharopine dehydrogenase [NAD(+), L-lysine-forming] (369 aa).

L-saccharopine-binding residues include Arg-19 and Lys-78. The active-site Proton acceptor is Lys-78. Residue His-96 is the Proton donor of the active site. Gln-101 is an L-saccharopine binding site. Arg-130 serves as a coordination point for NAD(+). L-saccharopine-binding residues include Arg-131 and Phe-135. NAD(+)-binding positions include 203 to 204 (GR), Asp-227, Thr-231, Tyr-251, and Val-278. Cys-205 and Cys-249 are disulfide-bonded. 279–281 (SAD) contributes to the L-saccharopine binding site. An NAD(+)-binding site is contributed by 318–321 (IDHL).

It belongs to the AlaDH/PNT family. In terms of assembly, monomer.

It carries out the reaction L-saccharopine + NAD(+) + H2O = L-lysine + 2-oxoglutarate + NADH + H(+). The protein operates within amino-acid biosynthesis; L-lysine biosynthesis via AAA pathway; L-lysine from L-alpha-aminoadipate (fungal route): step 3/3. Functionally, catalyzes the NAD(+)-dependent cleavage of saccharopine to L-lysine and 2-oxoglutarate, the final step in the alpha-aminoadipate (AAA) pathway for lysin biosynthesis. The protein is Saccharopine dehydrogenase [NAD(+), L-lysine-forming] of Yarrowia lipolytica (strain CLIB 122 / E 150) (Yeast).